We begin with the raw amino-acid sequence, 89 residues long: Small ribosomal subunit protein uS19 (89 aa).

It belongs to the universal ribosomal protein uS19 family.

Its function is as follows. Protein S19 forms a complex with S13 that binds strongly to the 16S ribosomal RNA. The chain is Small ribosomal subunit protein uS19 from Vesicomyosocius okutanii subsp. Calyptogena okutanii (strain HA).